The primary structure comprises 390 residues: Uroporphyrinogen decarboxylase 2, chloroplastic (390 aa).

The transit peptide at 1 to 30 (MATACPPLSLQPAYLSGRSARARRPPPAVR) directs the protein to the chloroplast. Residues 70–74 (RQAGR), F89, S119, D120, Y197, S252, and H367 contribute to the substrate site.

It belongs to the uroporphyrinogen decarboxylase family. In terms of assembly, homodimer.

It localises to the plastid. It is found in the chloroplast. It catalyses the reaction uroporphyrinogen III + 4 H(+) = coproporphyrinogen III + 4 CO2. The protein operates within porphyrin-containing compound metabolism; protoporphyrin-IX biosynthesis; coproporphyrinogen-III from 5-aminolevulinate: step 4/4. Functionally, catalyzes the decarboxylation of four acetate groups of uroporphyrinogen-III to yield coproporphyrinogen-III. The polypeptide is Uroporphyrinogen decarboxylase 2, chloroplastic (Oryza sativa subsp. japonica (Rice)).